A 268-amino-acid chain; its full sequence is tRNA pseudouridine synthase A (268 aa).

Catalysis depends on Asp-52, which acts as the Nucleophile. Tyr-113 is a binding site for substrate.

This sequence belongs to the tRNA pseudouridine synthase TruA family. In terms of assembly, homodimer.

The catalysed reaction is uridine(38/39/40) in tRNA = pseudouridine(38/39/40) in tRNA. Formation of pseudouridine at positions 38, 39 and 40 in the anticodon stem and loop of transfer RNAs. In Chlamydia abortus (strain DSM 27085 / S26/3) (Chlamydophila abortus), this protein is tRNA pseudouridine synthase A.